The primary structure comprises 397 residues: uncharacterized protein (397 aa).

A run of 4 helical transmembrane segments spans residues 22–42 (ILTM…VAVG), 270–290 (IMTT…GIGV), 327–347 (VVLT…GAAL), and 362–382 (VVCG…MLPA).

The protein belongs to the ABC-4 integral membrane protein family. As to quaternary structure, part of a complex composed of YknX, YknY and YknZ. The complex interacts with YknW.

Its subcellular location is the cell membrane. The protein localises to the membrane raft. Its function is as follows. Part of an unusual four-component transporter, which is required for protection against the killing factor SdpC (sporulation-delaying protein). This is an uncharacterized protein from Bacillus subtilis (strain 168).